The following is a 529-amino-acid chain: MLPVQILKDNAQEERGESARLSSFVGAIAIGDLVKSTLGPKGMDKILISGNPESAGGIKVTNDGATILKSIGVDNPAAKVLVDMSMTQDHEVGDGTTSVTVLAAELLKEAEKLVNQRIHPQTIISGYRRALGIAQESLKKSSIESGDNIRDDLLKIARTTLGSKILSQHKEHFAQLAVDAVLRLKGSGNLDAIQIIKKLGGSMNESYLDEGFLLEKLPGMFQPRRVEKAKILIANTPMDTDKVKVFGSRVRVDGVAKVAELEAAEKLKMKEKVDKILAHNCNVFINRQLIYNYPEQLFADAKVMAIEHADFEGIERLALVLGGEIVSTFDSPQTAQFGSCDLIEEIMIGEDRLLRFSGVKLGEACSVVLRGATQQILDESERSLHDALCVLVTHVKESKTVAGAGASEILMSSAIAVEAQKVAGKEALAVEAFGRALAQLPTIICDNAGLDSAELVTRLRAEHANGRHNMGIDIEKGEVADVTKLGVIESYNVKLCMVSSAAEATEQILRVDDIIKAAPRARAQDNRPC.

It belongs to the TCP-1 chaperonin family. In terms of assembly, heterooligomeric complex of about 850 to 900 kDa that forms two stacked rings, 12 to 16 nm in diameter.

Its subcellular location is the cytoplasm. Its function is as follows. Molecular chaperone; assists the folding of proteins upon ATP hydrolysis. Known to play a role, in vitro, in the folding of actin and tubulin. This is T-complex protein 1 subunit beta (cct-2) from Caenorhabditis elegans.